The primary structure comprises 261 residues: tRNA U34 carboxymethyltransferase (261 aa).

Carboxy-S-adenosyl-L-methionine contacts are provided by residues K25, W39, K44, G63, 114–115 (VE), Y135, and R250.

This sequence belongs to the class I-like SAM-binding methyltransferase superfamily. CmoB family. Homotetramer.

The catalysed reaction is carboxy-S-adenosyl-L-methionine + 5-hydroxyuridine(34) in tRNA = 5-carboxymethoxyuridine(34) in tRNA + S-adenosyl-L-homocysteine + H(+). Functionally, catalyzes carboxymethyl transfer from carboxy-S-adenosyl-L-methionine (Cx-SAM) to 5-hydroxyuridine (ho5U) to form 5-carboxymethoxyuridine (cmo5U) at position 34 in tRNAs. The polypeptide is tRNA U34 carboxymethyltransferase (Helicobacter pylori (strain P12)).